The sequence spans 295 residues: Perivine-Nbeta-methyltransferase (295 aa).

The SAM motif I stretch occupies residues 76 to 85 (ILDVGCGKGG). The Vacuolar targeting signal motif lies at 138–144 (DGSFELI). The segment at 139-147 (GSFELIFVI) is SAM motif II. An SAM motif III region spans residues 166–175 (VAAPGAQIVI).

It belongs to the class I-like SAM-binding methyltransferase superfamily. gTMT family. As to quaternary structure, homodimer. Mainly expressed in young leaves, and, to a lower extent, in mature leaves, flowers, stems and roots (at protein level). Transcripts levels are highest in flowers, moderate in leaves and low in roots and stems.

Its subcellular location is the vacuole membrane. It carries out the reaction perivine + S-adenosyl-L-methionine = vobasine + S-adenosyl-L-homocysteine + 2 H(+). It participates in alkaloid biosynthesis; vindoline biosynthesis. S-adenosyl-L-methionine-dependent N-methyltransferase involved in the biosynthesis of biologically active monoterpenoid indole alkaloids (MIAs) natural products including vindoline. Catalyzes the conversion of perivine to Nbeta-methylperivine (vobasine) by methylating its N4 nitrogen. Inactive with picrinine as substrate. In Catharanthus roseus (Madagascar periwinkle), this protein is Perivine-Nbeta-methyltransferase.